A 359-amino-acid chain; its full sequence is Photosystem II protein D1 1 (359 aa).

3 consecutive transmembrane segments (helical) span residues 29 to 46 (YVGW…AATI), 118 to 133 (HFLI…EWEL), and 142 to 156 (WICV…AASA). Position 118 (His-118) interacts with chlorophyll a. Position 126 (Tyr-126) interacts with pheophytin a. Residues Asp-170 and Glu-189 each contribute to the [CaMn4O5] cluster site. The chain crosses the membrane as a helical span at residues 197 to 218 (FHMLGVAGVFGGSLFSAMHGSL). His-198 provides a ligand contact to chlorophyll a. A quinone-binding positions include His-215 and 264–265 (SF). Fe cation is bound at residue His-215. His-272 provides a ligand contact to Fe cation. A helical transmembrane segment spans residues 274–288 (FLAAWPVVGIWFTAL). His-332, Glu-333, Asp-342, and Ala-344 together coordinate [CaMn4O5] cluster. A propeptide spanning residues 345-359 (AAESTPVALQAPAIG) is cleaved from the precursor.

The protein belongs to the reaction center PufL/M/PsbA/D family. In terms of assembly, PSII is composed of 1 copy each of membrane proteins PsbA, PsbB, PsbC, PsbD, PsbE, PsbF, PsbH, PsbI, PsbJ, PsbK, PsbL, PsbM, PsbT, PsbX, PsbY, PsbZ, Psb30/Ycf12, peripheral proteins PsbO, CyanoQ (PsbQ), PsbU, PsbV and a large number of cofactors. It forms dimeric complexes. The D1/D2 heterodimer binds P680, chlorophylls that are the primary electron donor of PSII, and subsequent electron acceptors. It shares a non-heme iron and each subunit binds pheophytin, quinone, additional chlorophylls, carotenoids and lipids. D1 provides most of the ligands for the Mn4-Ca-O5 cluster of the oxygen-evolving complex (OEC). There is also a Cl(-1) ion associated with D1 and D2, which is required for oxygen evolution. The PSII complex binds additional chlorophylls, carotenoids and specific lipids. serves as cofactor. Post-translationally, tyr-161 forms a radical intermediate that is referred to as redox-active TyrZ, YZ or Y-Z. C-terminally processed by CtpA; processing is essential to allow assembly of the oxygen-evolving complex and thus photosynthetic growth.

It is found in the cellular thylakoid membrane. The catalysed reaction is 2 a plastoquinone + 4 hnu + 2 H2O = 2 a plastoquinol + O2. Photosystem II (PSII) is a light-driven water:plastoquinone oxidoreductase that uses light energy to abstract electrons from H(2)O, generating O(2) and a proton gradient subsequently used for ATP formation. It consists of a core antenna complex that captures photons, and an electron transfer chain that converts photonic excitation into a charge separation. The D1/D2 (PsbA/PsbD) reaction center heterodimer binds P680, the primary electron donor of PSII as well as several subsequent electron acceptors. This chain is Photosystem II protein D1 1, found in Synechococcus sp. (strain CC9605).